Here is a 595-residue protein sequence, read N- to C-terminus: Protein alan shepard (595 aa).

The span at 1–12 shows a compositional bias: pro residues; sequence MHPRYSPAPPPH. Residues 1-82 are disordered; it reads MHPRYSPAPP…ASVAAAPPTP (82 aa). The residue at position 5 (Tyr-5) is a Phosphotyrosine. The segment covering 13–31 has biased composition (low complexity); the sequence is QQQQQQQQQPMGGPHQQQS. The segment covering 32-43 has biased composition (gly residues); the sequence is AGGGPGHGGGAS. Polar residues predominate over residues 50-68; the sequence is PNSQQLPPQMPRSQNYANG. The span at 69 to 78 shows a compositional bias: low complexity; the sequence is SSSAASVAAA. Tyr-138 and Tyr-154 each carry phosphotyrosine. Residues 184-238 are disordered; it reads RVPTAASPSNTNSSSSSNTGSQSGTLSTSLSNTTNTNTTMGPNGTAQNQNQQGGE. Over residues 190–238 the composition is skewed to low complexity; it reads SPSNTNSSSSSNTGSQSGTLSTSLSNTTNTNTTMGPNGTAQNQNQQGGE. 2 consecutive RRM domains span residues 243-316 and 322-401; these read TNLY…MAKQ and TNLY…FADG. The segment at 569 to 595 is disordered; that stretch reads MTDSEQASTAASPDEAYTQYPHQAAPK.

Its function is as follows. Has a role in the perception of gravity. In Drosophila virilis (Fruit fly), this protein is Protein alan shepard.